The sequence spans 698 residues: ATP-dependent RNA helicase DHX33 (698 aa).

Disordered regions lie at residues 1–20 and 29–50; these read MPEE…SCPP and TAGG…AQPS. The tract at residues 1–71 is required for nucleolar location; that stretch reads MPEEASLPPA…RRSLPIFRAR (71 aa). Gly residues predominate over residues 30-40; that stretch reads AGGGGGAGGGR. A Helicase ATP-binding domain is found at 75–243; that stretch reads LAQLRNLDNA…FNRAPVLYLE (169 aa). 88-95 provides a ligand contact to ATP; it reads GETGSGKT. The DEAH box signature appears at 185 to 188; the sequence is DEAH. Residues 271–441 enclose the Helicase C-terminal domain; the sequence is QIHQEAPASQ…SVILQLLAMK (171 aa). The interval 462-553 is HA2; required for interaction with EIF3G and RPL26; that stretch reads AIAQLDLLGA…ISSEGDHITL (92 aa). The short motif at 536-550 is the Critical for rDNA-binding element; that stretch reads VQSVRKKFISSEGDH.

This sequence belongs to the DEAD box helicase family. DEAH subfamily. As to quaternary structure, interacts with UBTF. Interacts with DDX3X, EIF3G and EIF3H; the interaction is independent of RNA. Interacts (via HA2 region and Helicase C-terminal domain) with the components of the large ribosomal subunit RPL3, RPL7, RPL26 and RPL27. Binds to mRNA. Interacts (via the helicase C-terminal domain) with MAVS. Binds to double-stranded RNA (via the helicase C-terminal domain). Ubiquitinated, leading to its degradation by the proteasome. Deubiquitinated by USP36.

It is found in the nucleus. The protein resides in the nucleolus. Its subcellular location is the nucleoplasm. The protein localises to the cytoplasm. It localises to the inflammasome. The catalysed reaction is ATP + H2O = ADP + phosphate + H(+). In terms of biological role, implicated in nucleolar organization, ribosome biogenesis, protein synthesis and cytoplasmic dsRNA sensing. Stimulates RNA polymerase I transcription of the 47S precursor rRNA. Associates with ribosomal DNA (rDNA) loci where it is involved in POLR1A recruitment. In the cytoplasm, promotes elongation-competent 80S ribosome assembly at the late stage of mRNA translation initiation. Senses cytosolic dsRNA mediating NLRP3 inflammasome formation in macrophages and type I interferon production in myeloid dendritic cells. Required for NLRP3 activation induced by viral dsRNA and bacterial RNA. In dendritic cells, required for induction of type I interferon production induced by cytoplasmic dsRNA via the activation of MAPK and NF-kappa-B signaling pathways. This Mus musculus (Mouse) protein is ATP-dependent RNA helicase DHX33.